Consider the following 774-residue polypeptide: Ent-beyerene synthase KSL4, chloroplastic (774 aa).

The N-terminal 35 residues, 1 to 35 (MLLGSTNTLRISSHGKEWEGKTLTGMPLGKVNQRV), are a transit peptide targeting the chloroplast. Aspartate 525, aspartate 529, asparagine 668, aspartate 669, threonine 672, and glutamate 676 together coordinate Mg(2+). A DDXXD motif motif is present at residues 525-529 (DDFFD).

It belongs to the terpene synthase family. Mg(2+) serves as cofactor.

It is found in the plastid. The protein localises to the chloroplast. The enzyme catalyses ent-copalyl diphosphate = ent-beyerene + diphosphate. It carries out the reaction ent-copalyl diphosphate = ent-atiserene + diphosphate. The catalysed reaction is ent-copalyl diphosphate = ent-kaur-16-ene + diphosphate. The protein operates within secondary metabolite biosynthesis; terpenoid biosynthesis. Its function is as follows. Diterpene cyclase involved in the biosynthesis of labdane-related diterpenoids (LRDs) natural products. Catalyzes the cyclization of ent-CDP into ent-beyerene as a major and ent-kaurene and ent-atiserene as minor products. In Ricinus communis (Castor bean), this protein is Ent-beyerene synthase KSL4, chloroplastic.